A 455-amino-acid chain; its full sequence is Keratin, type I cuticular Ha5 (455 aa).

Positions 1-97 (MASKCLKASF…FGEGILTGNE (97 aa)) are head. An IF rod domain is found at 97–408 (EKETMQSLND…GLLESEDSKL (312 aa)). Residues 98-132 (KETMQSLNDRLASYLEKVRQLEQENASLESRIREW) form a coil 1A region. Residues 133–143 (CEQQVPYMCPD) form a linker 1 region. A coil 1B region spans residues 144–244 (YQSYFRTMEE…HEEEVNSLRC (101 aa)). The segment at 245–260 (QLGDRLNVEVDAAPPV) is linker 12. Positions 261–404 (DLNRVLDEMR…NTYRGLLESE (144 aa)) are coil 2. Residues 405-455 (DSKLPCNPCAPDYSSSKSCLPCLPAVSCSTGAARTTCSPRPVCVPCPGGRF) form a tail region.

This sequence belongs to the intermediate filament family.

This is Keratin, type I cuticular Ha5 from Mus musculus (Mouse).